The sequence spans 208 residues: Octanoyltransferase (208 aa).

The BPL/LPL catalytic domain occupies 29-208 (KTQDELVWLL…KEFNKVFCNC (180 aa)). Substrate contacts are provided by residues 68–75 (RGGKYTYH), 140–142 (AFG), and 153–155 (GVS). Catalysis depends on C171, which acts as the Acyl-thioester intermediate.

The protein belongs to the LipB family.

It localises to the cytoplasm. The catalysed reaction is octanoyl-[ACP] + L-lysyl-[protein] = N(6)-octanoyl-L-lysyl-[protein] + holo-[ACP] + H(+). Its pathway is protein modification; protein lipoylation via endogenous pathway; protein N(6)-(lipoyl)lysine from octanoyl-[acyl-carrier-protein]: step 1/2. In terms of biological role, catalyzes the transfer of endogenously produced octanoic acid from octanoyl-acyl-carrier-protein onto the lipoyl domains of lipoate-dependent enzymes. Lipoyl-ACP can also act as a substrate although octanoyl-ACP is likely to be the physiological substrate. This chain is Octanoyltransferase, found in Ehrlichia ruminantium (strain Gardel).